A 457-amino-acid polypeptide reads, in one-letter code: Glutamyl-tRNA reductase (457 aa).

Residues 49 to 52, serine 109, 114 to 116, and glutamine 120 contribute to the substrate site; these read TCNR and ETQ. Cysteine 50 functions as the Nucleophile in the catalytic mechanism. 189–194 serves as a coordination point for NADP(+); it reads GAGKMG.

Belongs to the glutamyl-tRNA reductase family. As to quaternary structure, homodimer.

It catalyses the reaction (S)-4-amino-5-oxopentanoate + tRNA(Glu) + NADP(+) = L-glutamyl-tRNA(Glu) + NADPH + H(+). It functions in the pathway porphyrin-containing compound metabolism; protoporphyrin-IX biosynthesis; 5-aminolevulinate from L-glutamyl-tRNA(Glu): step 1/2. In terms of biological role, catalyzes the NADPH-dependent reduction of glutamyl-tRNA(Glu) to glutamate 1-semialdehyde (GSA). In Oceanobacillus iheyensis (strain DSM 14371 / CIP 107618 / JCM 11309 / KCTC 3954 / HTE831), this protein is Glutamyl-tRNA reductase.